The primary structure comprises 350 residues: Phenylalanine--tRNA ligase alpha subunit (350 aa).

Glu257 serves as a coordination point for Mg(2+).

This sequence belongs to the class-II aminoacyl-tRNA synthetase family. Phe-tRNA synthetase alpha subunit type 1 subfamily. As to quaternary structure, tetramer of two alpha and two beta subunits. Mg(2+) is required as a cofactor.

The protein localises to the cytoplasm. The enzyme catalyses tRNA(Phe) + L-phenylalanine + ATP = L-phenylalanyl-tRNA(Phe) + AMP + diphosphate + H(+). This Listeria monocytogenes serotype 4a (strain HCC23) protein is Phenylalanine--tRNA ligase alpha subunit.